The following is a 728-amino-acid chain: Catalase-peroxidase 1 (728 aa).

The tryptophyl-tyrosyl-methioninium (Trp-Tyr) (with M-244) cross-link spans 91-218 (WHSAGTYRTA…LAAVQMGLIY (128 aa)). The active-site Proton acceptor is histidine 92. The tryptophyl-tyrosyl-methioninium (Tyr-Met) (with W-91) cross-link spans 218-244 (YVNPEGPDGNPDPVAAAHDIRETFARM). Residue histidine 259 participates in heme b binding.

This sequence belongs to the peroxidase family. Peroxidase/catalase subfamily. Homodimer or homotetramer. It depends on heme b as a cofactor. Formation of the three residue Trp-Tyr-Met cross-link is important for the catalase, but not the peroxidase activity of the enzyme.

The catalysed reaction is H2O2 + AH2 = A + 2 H2O. It catalyses the reaction 2 H2O2 = O2 + 2 H2O. In terms of biological role, bifunctional enzyme with both catalase and broad-spectrum peroxidase activity. This chain is Catalase-peroxidase 1, found in Burkholderia cenocepacia (strain ATCC BAA-245 / DSM 16553 / LMG 16656 / NCTC 13227 / J2315 / CF5610) (Burkholderia cepacia (strain J2315)).